A 360-amino-acid polypeptide reads, in one-letter code: Josephin-like protein (360 aa).

Positions 5 to 192 (ESKIYHERQR…NQLPLASNYR (188 aa)) constitute a Josephin domain. Catalysis depends on C18, which acts as the Nucleophile. H129 (proton acceptor) is an active-site residue.

The enzyme catalyses Thiol-dependent hydrolysis of ester, thioester, amide, peptide and isopeptide bonds formed by the C-terminal Gly of ubiquitin (a 76-residue protein attached to proteins as an intracellular targeting signal).. May act as a deubiquitinating enzyme. This chain is Josephin-like protein, found in Arabidopsis thaliana (Mouse-ear cress).